Consider the following 214-residue polypeptide: Methyltransferase HEMK2 (214 aa).

T29, E51, G53, D77, D103, L104, and N122 together coordinate S-adenosyl-L-homocysteine. 7 residues coordinate S-adenosyl-L-methionine: T29, E51, G53, D77, D103, L104, and N122. Residue N122 participates in a protein binding.

The protein belongs to the eukaryotic/archaeal PrmC-related family. In terms of assembly, heterodimer; heterodimerization with TRMT112 is required for S-adenosyl-L-methionine-binding. As to quaternary structure, does not interact with TRMT112. Post-translationally, ubiquitinated, leading to its degradation by the proteasome. Widely expressed, with highest expression in parathyroid and pituitary glands, followed by adrenal gland and kidney, and lowest expression in leukocytes and mammary gland.

It localises to the nucleus. The enzyme catalyses L-lysyl-[histone] + S-adenosyl-L-methionine = N(6)-methyl-L-lysyl-[histone] + S-adenosyl-L-homocysteine + H(+). It carries out the reaction L-glutaminyl-[protein] + S-adenosyl-L-methionine = N(5)-methyl-L-glutaminyl-[protein] + S-adenosyl-L-homocysteine + H(+). The catalysed reaction is methylarsonous acid + S-adenosyl-L-methionine = dimethylarsinate + S-adenosyl-L-homocysteine + 2 H(+). Methyltransferase that can methylate proteins and, to a lower extent, arsenic. Catalytic subunit of a heterodimer with TRMT112, which monomethylates 'Lys-12' of histone H4 (H4K12me1), a modification present at the promoters of numerous genes encoding cell cycle regulators. Catalytic subunit of a heterodimer with TRMT112, which catalyzes N5-methylation of Glu residue of proteins with a Gly-Gln-Xaa-Xaa-Xaa-Arg motif. Methylates ETF1 on 'Gln-185'; ETF1 needs to be complexed to ERF3 in its GTP-bound form to be efficiently methylated. May also play a role in the modulation of arsenic-induced toxicity by mediating the conversion of monomethylarsonous acid (3+) into the less toxic dimethylarsonic acid. It however only plays a limited role in arsenic metabolism compared with AS3MT. The chain is Methyltransferase HEMK2 from Homo sapiens (Human).